We begin with the raw amino-acid sequence, 107 residues long: U1-lycotoxin-Ls1b (107 aa).

The signal sequence occupies residues 1–20 (MMKVLVVVALLVTLISYSSS). A propeptide spanning residues 21–41 (EGIDDLEADELLSLMADEQTR) is cleaved from the precursor. 4 disulfides stabilise this stretch: Cys44–Cys59, Cys51–Cys68, Cys58–Cys86, and Cys70–Cys84.

The protein belongs to the neurotoxin 19 (CSTX) family. 04 (U1-Lctx) subfamily. Expressed by the venom gland.

It localises to the secreted. This Lycosa singoriensis (Wolf spider) protein is U1-lycotoxin-Ls1b.